A 3033-amino-acid polypeptide reads, in one-letter code: Genome polyprotein (3033 aa).

Residue serine 2 is modified to N-acetylserine; by host. Positions serine 2–lysine 23 are interaction with STAT1. The interaction with EIF2AK2/PKR stretch occupies residues serine 2–proline 58. The interaction with DDX3X stretch occupies residues serine 2–arginine 59. The tract at residues serine 2–alanine 75 is disordered. Residues serine 2–asparagine 168 lie on the Cytoplasmic side of the membrane. 2 consecutive short sequence motifs (nuclear localization signal) follow at residues proline 5–arginine 13 and proline 38–arginine 43. Positions proline 7–asparagine 16 are enriched in basic residues. Low complexity predominate over residues glycine 32 to arginine 47. The residue at position 53 (serine 53) is a Phosphoserine; by host. Short sequence motifs (nuclear localization signal) lie at residues proline 58–proline 64 and proline 66–serine 71. At serine 99 the chain carries Phosphoserine; by host. Residues proline 112–alanine 152 are important for endoplasmic reticulum and mitochondrial localization. Residue serine 116 is modified to Phosphoserine; by host PKA. The interaction with APOA2 stretch occupies residues valine 122 to proline 173. The important for lipid droplets localization stretch occupies residues tyrosine 164–glycine 167. The helical transmembrane segment at leucine 169 to valine 189 threads the bilayer. The propeptide at leucine 178–alanine 191 is ER anchor for the core protein, removed in mature form by host signal peptidase. Topologically, residues serine 190–glycine 358 are lumenal. N-linked (GlcNAc...) asparagine; by host glycosylation is found at asparagine 196, asparagine 209, and asparagine 234. The tract at residues valine 265–glutamine 296 is important for fusion. N-linked (GlcNAc...) asparagine; by host glycosylation is present at asparagine 305. Residues leucine 359–alanine 379 form a helical membrane-spanning segment. The Lumenal portion of the chain corresponds to glycine 380 to leucine 729. The interval threonine 385–isoleucine 411 is HVR1. N-linked (GlcNAc...) (high mannose) asparagine; by host glycans are attached at residues asparagine 417, asparagine 423, asparagine 430, and asparagine 448. Cystine bridges form between cysteine 429–cysteine 554, cysteine 452–cysteine 459, cysteine 488–cysteine 496, and cysteine 505–cysteine 510. An N-linked (GlcNAc...) (high mannose) asparagine; by host glycan is attached at asparagine 477. The interval methionine 484–cysteine 496 is CD81-binding 1. The CD81-binding 2 stretch occupies residues arginine 524–threonine 555. N-linked (GlcNAc...) (high mannose) asparagine; by host glycans are attached at residues asparagine 534, asparagine 542, and asparagine 558. Cysteines 566 and 571 form a disulfide. The N-linked (GlcNAc...) (high mannose) asparagine; by host glycan is linked to asparagine 578. Cystine bridges form between cysteine 585/cysteine 589, cysteine 601/cysteine 624, and cysteine 611/cysteine 648. Asparagine 627 and asparagine 649 each carry an N-linked (GlcNAc...) (high mannose) asparagine; by host glycan. The cysteines at positions 656 and 681 are disulfide-linked. The EIF2AK2/eIF2-alpha phosphorylation homology domain (PePHD) stretch occupies residues serine 664–glutamate 675. The helical transmembrane segment at leucine 730 to alanine 750 threads the bilayer. Residues alanine 751–alanine 761 lie on the Lumenal side of the membrane. Residues serine 762–isoleucine 782 traverse the membrane as a helical segment. Residues arginine 783–arginine 785 lie on the Cytoplasmic side of the membrane. A helical membrane pass occupies residues valine 786 to leucine 807. The Lumenal portion of the chain corresponds to proline 808 to proline 817. The helical transmembrane segment at valine 818–glycine 838 threads the bilayer. Residues tyrosine 839–leucine 842 are Cytoplasmic-facing. A helical membrane pass occupies residues leucine 843–glutamate 863. Over tryptophan 864 to cysteine 885 the chain is Lumenal. The chain crosses the membrane as a helical span at residues proline 886–leucine 906. Residues arginine 907–leucine 1030 form the Peptidase C18 domain. At arginine 907 to threonine 1661 the chain is on the cytoplasmic side. The segment at alanine 908 to arginine 1210 is protease NS2-3. Cysteine 926 is lipidated: S-palmitoyl cysteine; by host. The interval alanine 933–isoleucine 953 is interaction with human SCPS1. Residues histidine 956, glutamate 976, and cysteine 997 each act as for protease NS2 activity; shared with dimeric partner in the active site. One can recognise a Peptidase S29 domain in the interval alanine 1031 to proline 1212. Catalysis depends on charge relay system; for serine protease NS3 activity residues histidine 1087 and aspartate 1111. Residues cysteine 1127 and cysteine 1129 each coordinate Zn(2+). The active-site Charge relay system; for serine protease NS3 activity is the serine 1169. Residues cysteine 1175 and histidine 1179 each contribute to the Zn(2+) site. In terms of domain architecture, Helicase ATP-binding spans proline 1221–arginine 1373. Alanine 1234–serine 1241 lines the ATP pocket. Residues serine 1241 and glutamate 1321 each coordinate Mg(2+). The DECH box motif lies at aspartate 1320 to histidine 1323. The segment at valine 1481–glycine 1501 is disordered. The RNA-binding stretch occupies residues glutamine 1490–glycine 1501. Residues serine 1662 to glycine 1682 traverse the membrane as a helical segment. The NS3-binding stretch occupies residues cysteine 1683 to glutamine 1694. Topologically, residues cysteine 1683 to threonine 1809 are cytoplasmic. The helical transmembrane segment at threonine 1810 to alanine 1830 threads the bilayer. The Lumenal portion of the chain corresponds to threonine 1831–glycine 1832. Residues phenylalanine 1833–valine 1853 traverse the membrane as a helical segment. The tract at residues glycine 1837 to glycine 1865 is glycine zipper. Residue aspartate 1854 is a topological domain, cytoplasmic. Residues isoleucine 1855–glycine 1875 traverse the membrane as a helical segment. The Lumenal segment spans residues glutamate 1876–asparagine 1885. Residues leucine 1886 to leucine 1906 traverse the membrane as a helical segment. Residues arginine 1907–cysteine 1976 lie on the Cytoplasmic side of the membrane. A lipid anchor (S-palmitoyl cysteine; by host) is attached at cysteine 1972. Residue cysteine 1976 is the site of S-palmitoyl cysteine; by host; partial attachment. The stretch at serine 1977–leucine 2007 is an intramembrane region. The tract at residues arginine 1982–lysine 2002 is membrane-binding. Over proline 2008–arginine 3012 the chain is Cytoplasmic. The segment at glycine 2009–threonine 2225 is D1; RNA-binding. 4 residues coordinate Zn(2+): cysteine 2015, cysteine 2033, cysteine 2035, and cysteine 2056. Residue tyrosine 2069 is modified to Phosphotyrosine; by host. Positions glutamate 2124–alanine 2212 are FKBP8-binding. A transcriptional activation region spans residues glutamate 2124–threonine 2332. The interaction with non-structural protein 4A stretch occupies residues proline 2139–proline 2143. Positions arginine 2192 to proline 2213 are disordered. Residues arginine 2196–proline 2213 show a composition bias toward low complexity. Serine 2198 bears the Phosphoserine; by host; in p56 mark. Serine 2201 is subject to Phosphoserine; by host; in p58. A Phosphoserine; by host; in p56 and p58, regulates intracellular NS5A distribution modification is found at serine 2205. A phosphoserine; by host; in p58 mark is found at serine 2208, serine 2211, and serine 2214. The tract at residues leucine 2210 to arginine 2249 is ISDR. Residues serine 2214–methionine 2275 form an interaction with EIF2AK2/PKR region. Residues aspartate 2227–alanine 2315 are D2. The interval valine 2228–alanine 2315 is disordered. Residues arginine 2249–tyrosine 2306 form an NS4B-binding region. The tract at residues phenylalanine 2281 to leucine 2297 is interaction with human PPIA/CYPA. Over residues leucine 2316–proline 2326 the composition is skewed to pro residues. Residues alanine 2322 to proline 2325 carry the SH3-binding motif. Threonine 2324 is subject to Phosphothreonine; by host. The Nuclear localization signal motif lies at proline 2326–glycine 2334. Residues arginine 2329–cysteine 2442 are D3. The interval serine 2336–serine 2447 is interaction with host IFI27. A Glycyl lysine isopeptide (Lys-Gly) (interchain with G-Cter in ubiquitin) cross-link involves residue lysine 2350. The tract at residues phenylalanine 2352–cysteine 2432 is disordered. Residues proline 2355–glycine 2379 are compositionally biased toward low complexity. Residues serine 2358–proline 2381 are V3. The segment at glutamate 2371–threonine 2439 is interaction with host VAPB. Over residues glutamate 2398–glutamine 2408 the composition is skewed to acidic residues. Over residues glycine 2417–serine 2426 the composition is skewed to gly residues. The region spanning proline 2656–aspartate 2774 is the RdRp catalytic domain. Aspartate 2662, aspartate 2760, and aspartate 2761 together coordinate Mg(2+). A helical transmembrane segment spans residues serine 3013–arginine 3033.

Belongs to the hepacivirus polyprotein family. As to quaternary structure, homooligomer. Interacts with E1 (via C-terminus). Interacts with the non-structural protein 5A. Interacts (via N-terminus) with host STAT1 (via SH2 domain); this interaction results in decreased STAT1 phosphorylation and ubiquitin-mediated proteasome-dependent STAT1 degradation, leading to decreased IFN-stimulated gene transcription. Interacts with host STAT3; this interaction constitutively activates STAT3. Interacts with host LTBR receptor. Interacts with host TNFRSF1A receptor and possibly induces apoptosis. Interacts with host HNRPK. Interacts with host YWHAE. Interacts with host UBE3A/E6AP. Interacts with host DDX3X. Interacts with host APOA2. Interacts with host RXRA protein. Interacts with host SP110 isoform 3/Sp110b; this interaction sequesters the transcriptional corepressor SP110 away from the nucleus. Interacts with host CREB3 nuclear transcription protein; this interaction triggers cell transformation. Interacts with host ACY3. Interacts with host C1QR1. Interacts with host RBM24; this interaction, which enhances the interaction of the mature core protein with 5'-UTR, may inhibit viral translation and favor replication. Interacts (via N-terminus) with host EIF2AK2/PKR (via N-terminus); this interaction induces the autophosphorylation of EIF2AK2. Part of the viral assembly initiation complex composed of NS2, E1, E2, NS3, NS4A, NS5A and the mature core protein. In terms of assembly, forms a heterodimer with envelope glycoprotein E2. Interacts with mature core protein. Interacts with protease NS2. The heterodimer E1/E2 interacts with host CLDN1; this interaction plays a role in viral entry into host cell. Interacts with host SPSB2 (via C-terminus). Part of the viral assembly initiation complex composed of NS2, E1, E2, NS3, NS4A, NS5A and the mature core protein. Forms a heterodimer with envelope glycoprotein E1. Interacts with host CD81 and SCARB1 receptors; these interactions play a role in viral entry into host cell. Interacts with host EIF2AK2/PKR; this interaction inhibits EIF2AK2 and probably allows the virus to evade the innate immune response. Interacts with host CD209/DC-SIGN and CLEC4M/DC-SIGNR. Interact with host SPCS1; this interaction is essential for viral particle assembly. Interacts with protease NS2. The heterodimer E1/E2 interacts with host CLDN1; this interaction plays a role in viral entry into host cell. Part of the viral assembly initiation complex composed of NS2, E1, E2, NS3, NS4A, NS5A and the mature core protein. Interacts with host SLC3A2/4F2hc; the interaction may facilitate viral entry into host cell. As to quaternary structure, homohexamer. Homoheptamer. Interacts with protease NS2. In terms of assembly, homodimer. Interacts with host SPCS1; this interaction is essential for viral particle assembly. Interacts with envelope glycoprotein E1. Interacts with envelope glycoprotein E2. Interacts with viroporin p7. Interacts with serine protease/helicase NS3. Part of the replication complex composed of NS2, NS3, NS4A, NS4B, NS5A and the RNA-directed RNA polymerase embedded in an ER-derived membranous web. Part of the viral assembly initiation complex composed of NS2, E1, E2, NS3, NS4A, NS5A and the mature core protein. Interacts with host NEURL3; this interaction prevents E1 binding to glycoprotein E2. Interacts with protease NS2. Interacts with non-structural protein 4A; this interaction stabilizes the folding of NS3 serine protease. NS3-NS4A interaction is essential for NS3 activation and allows membrane anchorage of the latter. NS3/NS4A complex also prevents phosphorylation of host IRF3, thus preventing the establishment of dsRNA induced antiviral state. Interacts with host MAVS; this interaction leads to the cleavage and inhibition of host MAVS. Interacts with host TICAM1; this interaction leads to the cleavage and inhibition of host TICAM1. Interacts with host TANK-binding kinase/TBK1; this interaction results in the inhibition of the association between TBK1 and IRF3, which leads to the inhibition of IRF3 activation. Interacts with host RBM24. Part of the replication complex composed of NS2, NS3, NS4A, NS4B, NS5A and the RNA-directed RNA polymerase embedded in an ER-derived membranous web. Part of the viral assembly initiation complex composed of NS2, E1, E2, NS3, NS4A, NS5A and the mature core protein. As to quaternary structure, interacts with NS3 serine protease; this interaction stabilizes the folding of NS3 serine protease. NS3-NS4A interaction is essential for NS3 activation and allows membrane anchorage of the latter. Interacts with non-structural protein 5A (via N-terminus). Part of the replication complex composed of NS2, NS3, NS4A, NS4B, NS5A and the RNA-directed RNA polymerase embedded in an ER-derived membranous web. Part of the viral assembly initiation complex composed of NS2, E1, E2, NS3, NS4A, NS5A and the mature core protein. In terms of assembly, homomultimer. Interacts with non-structural protein NS5A. Interacts with host PLA2G4C; this interaction likely initiates the recruitment of replication complexes to lipid droplets. Interacts with host STING; this interaction disrupts the interaction between STING and TBK1 thereby suppressing the interferon signaling. Part of the replication complex composed of NS2, NS3, NS4A, NS4B, NS5A and the RNA-directed RNA polymerase embedded in an ER-derived membranous web. Monomer. Homodimer; dimerization is required for RNA-binding. Interacts with the mature core protein. Interacts (via N-terminus) with non-structural protein 4A. Interacts with non-structural protein 4B. Interacts (via region D2) with RNA-directed RNA polymerase. Part of the viral assembly initiation complex composed of NS2, E1, E2, NS3, NS4A, NS5A and the mature core protein. Part of the replication complex composed of NS2, NS3, NS4A, NS4B, NS5A and the RNA-directed RNA polymerase embedded in an ER-derived membranous web. Interacts with host GRB2. Interacts with host BIN1. Interacts with host PIK3R1. Interacts with host SRCAP. Interacts with host FKBP8. Interacts (via C-terminus) with host VAPB (via MSP domain). Interacts with host EIF2AK2/PKR; this interaction leads to disruption of EIF2AK2 dimerization by NS5A and probably allows the virus to evade the innate immune response. Interacts (via N-terminus) with host PACSIN2 (via N-terminus); this interaction attenuates protein kinase C alpha-mediated phosphorylation of PACSIN2 by disrupting the interaction between PACSIN2 and PRKCA. Interacts (via N-terminus) with host SRC kinase (via SH2 domain). Interacts with most Src-family kinases. Interacts with host IFI27 and SKP2; promotes the ubiquitin-mediated proteasomal degradation of NS5A. Interacts with host GPS2. Interacts with host TNFRSF21; this interaction allows the modulation by the virus of JNK, p38 MAPK, STAT3, and Akt signaling pathways in a DR6-dependent manner. Interacts (via N-terminus) with host CIDEB (via N-terminus); this interaction seems to regulate the association of HCV particles with APOE. Interacts with host CHKA/Choline Kinase-alpha; CHKA bridges host PI4KA and NS5A and potentiates NS5A-stimulated PI4KA activity, which then facilitates the targeting of the ternary complex to the ER for viral replication. Interacts with host SPSB2 (via C-terminus); this interaction targets NS5A for ubiquitination and degradation. Interacts with host RAB18; this interaction may promote the association of NS5A and other replicase components with lipid droplets. Interacts (via region D2) with host PPIA/CYPA; the interaction stimulates RNA-binding ability of NS5A and is dependent on the peptidyl-prolyl cis-trans isomerase activity of PPIA/CYPA. Interacts with host TRIM14; this interaction induces the degradation of NS5A. As to quaternary structure, homooligomer. Interacts with non-structural protein 5A. Interacts with host VAPB. Interacts with host PRK2/PKN2. Interacts with host HNRNPA1 and SEPT6; these interactions facilitate the viral replication. Part of the replication complex composed of NS2, NS3, NS4A, NS4B, NS5A and the RNA-directed RNA polymerase embedded in an ER-derived membranous web. Zn(2+) serves as cofactor. The cofactor is Mg(2+). Specific enzymatic cleavages in vivo yield mature proteins. The structural proteins, core, E1, E2 and p7 are produced by proteolytic processing by host signal peptidases. The core protein is synthesized as a 23 kDa precursor which is retained in the ER membrane through the hydrophobic signal peptide. Cleavage by the signal peptidase releases the 21 kDa mature core protein. The cleavage of the core protein precursor occurs between aminoacids 176 and 188 but the exact cleavage site is not known. Some degraded forms of the core protein appear as well during the course of infection. The other proteins (p7, NS2, NS3, NS4A, NS4B, NS5A and NS5B) are cleaved by the viral proteases. Autoprocessing between NS2 and NS3 is mediated by the NS2 cysteine protease catalytic domain and regulated by the NS3 N-terminal domain. Post-translationally, phosphorylated by host PKC and PKA. In terms of processing, ubiquitinated; mediated by UBE3A and leading to core protein subsequent proteasomal degradation. Highly N-glycosylated. Post-translationally, palmitoylation is required for NS2/3 autoprocessing and E2 recruitment to membranes. In terms of processing, palmitoylated. This modification may play a role in its polymerization or in protein-protein interactions. Cleaved by host caspases which arec probably activated by the viral infection. Post-translationally, ubiquitinated. Ubiquitination, most probably at Lys-2350, mediated by host IFI27 and SKP2 leads to proteasomal degradation, restricting viral infection. In terms of processing, phosphorylated on serines in a basal form termed p56. p58 is a hyperphosphorylated form of p56. p56 and p58 coexist in the cell in roughly equivalent amounts. Hyperphosphorylation is dependent on the presence of NS4A. Host CSNK1A1/CKI-alpha, PI4KA or RPS6KB1 kinases may be responsible for NS5A phosphorylation. Phosphorylated NS5A is involved in viral replication. Tyrosine phosphorylation is essential for the interaction with host SRC. Post-translationally, the N-terminus is phosphorylated by host PRK2/PKN2.

It localises to the host endoplasmic reticulum membrane. The protein resides in the host mitochondrion membrane. It is found in the virion. Its subcellular location is the host cytoplasm. The protein localises to the host nucleus. It localises to the host lipid droplet. The protein resides in the virion membrane. It is found in the host mitochondrion. Its subcellular location is the host cell membrane. The protein localises to the host perinuclear region. The enzyme catalyses Hydrolysis of four peptide bonds in the viral precursor polyprotein, commonly with Asp or Glu in the P6 position, Cys or Thr in P1 and Ser or Ala in P1'.. It catalyses the reaction a ribonucleoside 5'-triphosphate + H2O = a ribonucleoside 5'-diphosphate + phosphate + H(+). It carries out the reaction ATP + H2O = ADP + phosphate + H(+). The catalysed reaction is RNA(n) + a ribonucleoside 5'-triphosphate = RNA(n+1) + diphosphate. Its activity is regulated as follows. Inhibited by the antiviral drug hexamethylene amiloride. Inhibition by amantadine appears to be genotype-dependent. Also inhibited by long-alkyl-chain iminosugar derivatives. With respect to regulation, activity is up-regulated by PRK2/PKN2-mediated phosphorylation. Its function is as follows. Packages viral RNA to form a viral nucleocapsid, and promotes virion budding. Participates in the viral particle production as a result of its interaction with the non-structural protein 5A. Binds RNA and may function as a RNA chaperone to induce the RNA structural rearrangements taking place during virus replication. Modulates viral translation initiation by interacting with viral IRES and 40S ribosomal subunit. Affects various cell signaling pathways, host immunity and lipid metabolism. Prevents the establishment of cellular antiviral state by blocking the interferon-alpha/beta (IFN-alpha/beta) and IFN-gamma signaling pathways and by blocking the formation of phosphorylated STAT1 and promoting ubiquitin-mediated proteasome-dependent degradation of STAT1. Activates STAT3 leading to cellular transformation. Regulates the activity of cellular genes, including c-myc and c-fos. May repress the promoter of p53, and sequester CREB3 and SP110 isoform 3/Sp110b in the cytoplasm. Represses cell cycle negative regulating factor CDKN1A, thereby interrupting an important check point of normal cell cycle regulation. Targets transcription factors involved in the regulation of inflammatory responses and in the immune response: suppresses NF-kappa-B activation, and activates AP-1. Binds to dendritic cells (DCs) via C1QR1, resulting in down-regulation of T-lymphocytes proliferation. Alters lipid metabolism by interacting with hepatocellular proteins involved in lipid accumulation and storage. Induces up-regulation of FAS promoter activity, and thereby contributes to the increased triglyceride accumulation in hepatocytes (steatosis). Forms a heterodimer with envelope glycoprotein E2, which mediates virus attachment to the host cell, virion internalization through clathrin-dependent endocytosis and fusion with host membrane. Fusion with the host cell is most likely mediated by both E1 and E2, through conformational rearrangements of the heterodimer required for fusion rather than a classical class II fusion mechanism. E1/E2 heterodimer binds host apolipoproteins such as APOB and APOE thereby forming a lipo-viro-particle (LVP). APOE associated to the LVP allows the initial virus attachment to cell surface receptors such as the heparan sulfate proteoglycans (HSPGs), syndecan-1 (SDC1), syndecan-1 (SDC2), the low-density lipoprotein receptor (LDLR) and scavenger receptor class B type I (SCARB1). The cholesterol transfer activity of SCARB1 allows E2 exposure and binding of E2 to SCARB1 and the tetraspanin CD81. E1/E2 heterodimer binding on CD81 activates the epithelial growth factor receptor (EGFR) signaling pathway. Diffusion of the complex E1-E2-EGFR-SCARB1-CD81 to the cell lateral membrane allows further interaction with Claudin 1 (CLDN1) and occludin (OCLN) to finally trigger HCV entry. Functionally, forms a heterodimer with envelope glycoprotein E1, which mediates virus attachment to the host cell, virion internalization through clathrin-dependent endocytosis and fusion with host membrane. Fusion with the host cell is most likely mediated by both E1 and E2, through conformational rearrangements of the heterodimer required for fusion rather than a classical class II fusion mechanism. The interaction between envelope glycoprotein E2 and host apolipoprotein E/APOE allows the proper assembly, maturation and infectivity of the viral particles. This interaction is probably promoted via the up-regulation of cellular autophagy by the virus. E1/E2 heterodimer binds host apolipoproteins such as APOB and APOE thereby forming a lipo-viro-particle (LVP). APOE associated to the LVP allows the initial virus attachment to cell surface receptors such as the heparan sulfate proteoglycans (HSPGs), syndecan-1 (SDC1), syndecan-1 (SDC2), the low-density lipoprotein receptor (LDLR) and scavenger receptor class B type I (SCARB1). The cholesterol transfer activity of SCARB1 allows E2 exposure and binding of E2 to SCARB1 and the tetraspanin CD81. E1/E2 heterodimer binding on CD81 activates the epithelial growth factor receptor (EGFR) signaling pathway. Diffusion of the complex E1-E2-EGFR-SCARB1-CD81 to the cell lateral membrane allows further interaction with Claudin 1 (CLDN1) and occludin (OCLN) to finally trigger HCV entry. Inhibits host EIF2AK2/PKR activation, preventing the establishment of an antiviral state. Viral ligand for CD209/DC-SIGN and CLEC4M/DC-SIGNR, which are respectively found on dendritic cells (DCs), and on liver sinusoidal endothelial cells and macrophage-like cells of lymph node sinuses. These interactions allow the capture of circulating HCV particles by these cells and subsequent facilitated transmission to permissive cells such as hepatocytes and lymphocyte subpopulations. The interaction between E2 and host amino acid transporter complex formed by SLC3A2 and SLC7A5/LAT1 may facilitate viral entry into host cell. In terms of biological role, ion channel protein that acts as a viroporin and plays an essential role in the assembly, envelopment and secretion of viral particles. Regulates the host cell secretory pathway, which induces the intracellular retention of viral glycoproteins and favors assembly of viral particles. Creates a pore in acidic organelles and releases Ca(2+) and H(+) in the cytoplasm of infected cells, leading to a productive viral infection. High levels of cytoplasmic Ca(2+) may trigger membrane trafficking and transport of viral ER-associated proteins to viroplasms, sites of viral genome replication. This ionic imbalance induces the assembly of the inflammasome complex, which triggers the maturation of pro-IL-1beta into IL-1beta through the action of caspase-1. Targets also host mitochondria and induces mitochondrial depolarization. In addition of its role as a viroporin, acts as a lipid raft adhesion factor. Its function is as follows. Cysteine protease required for the proteolytic auto-cleavage between the non-structural proteins NS2 and NS3. The N-terminus of NS3 is required for the function of NS2 protease (active region NS2-3). Promotes the initiation of viral particle assembly by mediating the interaction between structural and non-structural proteins. Displays three enzymatic activities: serine protease with a chymotrypsin-like fold, NTPase and RNA helicase. NS3 serine protease, in association with NS4A, is responsible for the cleavages of NS3-NS4A, NS4A-NS4B, NS4B-NS5A and NS5A-NS5B. The NS3/NS4A complex prevents phosphorylation of host IRF3, thus preventing the establishment of dsRNA induced antiviral state. The NS3/NS4A complex induces host amino acid transporter component SLC3A2, thus contributing to HCV propagation. NS3 RNA helicase binds to RNA and unwinds both dsDNA and dsRNA in the 3' to 5' direction, and likely resolves RNA complicated stable secondary structures in the template strand. Binds a single ATP and catalyzes the unzipping of a single base pair of dsRNA. Inhibits host antiviral proteins TBK1 and IRF3 thereby preventing the establishment of an antiviral state. Cleaves host MAVS/CARDIF thereby preventing the establishment of an antiviral state. Cleaves host TICAM1/TRIF, thereby disrupting TLR3 signaling and preventing the establishment of an antiviral state. Functionally, peptide cofactor which forms a non-covalent complex with the N-terminal of NS3 serine protease. The NS3/NS4A complex prevents phosphorylation of host IRF3, thus preventing the establishment of dsRNA induced antiviral state. The NS3/NS4A complex induces host amino acid transporter component SLC3A2, thus contributing to HCV propagation. In terms of biological role, induces a specific membrane alteration that serves as a scaffold for the virus replication complex. This membrane alteration gives rise to the so-called ER-derived membranous web that contains the replication complex. NS4B self-interaction contributes to its function in membranous web formation. Promotes host TRIF protein degradation in a CASP8-dependent manner thereby inhibiting host TLR3-mediated interferon signaling. Disrupts the interaction between STING and TBK1 contributing to the inhibition of interferon signaling. Its function is as follows. Phosphorylated protein that is indispensable for viral replication and assembly. Both hypo- and hyperphosphorylated states are required for the viral life cycle. The hyperphosphorylated form of NS5A is an inhibitor of viral replication. Involved in RNA-binding and especially in binding to the viral genome. Zinc is essential for RNA-binding. Participates in the viral particle production as a result of its interaction with the viral mature core protein. Its interaction with host VAPB may target the viral replication complex to vesicles. Down-regulates viral IRES translation initiation. Mediates interferon resistance, presumably by interacting with and inhibiting host EIF2AK2/PKR. Prevents BIN1-induced apoptosis. Acts as a transcriptional activator of some host genes important for viral replication when localized in the nucleus. Via the interaction with host PACSIN2, modulates lipid droplet formation in order to promote virion assembly. Modulates TNFRSF21/DR6 signaling pathway for viral propagation. RNA-dependent RNA polymerase that performs primer-template recognition and RNA synthesis during viral replication. Initiates RNA transcription/replication at a flavin adenine dinucleotide (FAD), resulting in a 5'- FAD cap on viral RNAs. In this way, recognition of viral 5' RNA by host pattern recognition receptors can be bypassed, thereby evading activation of antiviral pathways. This chain is Genome polyprotein, found in Homo sapiens (Human).